Consider the following 539-residue polypeptide: Transcription factor LG2 (539 aa).

Residues 115-125 (MRQQQQLHSGN) show a composition bias toward polar residues. Disordered regions lie at residues 115 to 140 (MRQQQQLHSGNSQSVGSTTDSSSAQN) and 181 to 246 (KPGL…KSRL). Low complexity-rich tracts occupy residues 126–137 (SQSVGSTTDSSS) and 192–205 (QQQHQLQHHQQQQL). Positions 219–242 (TRKDGKSVDAKTERRLAQNREAAR) are enriched in basic and acidic residues. The bZIP domain maps to 227-271 (DAKTERRLAQNREAARKSRLRKKAYVQNLETSRVRLQQIEQELQR). The basic motif stretch occupies residues 229–249 (KTERRLAQNREAARKSRLRKK). A leucine-zipper region spans residues 255 to 269 (LETSRVRLQQIEQEL). Residues 292-506 (AAMFDMEYAR…RALSNLWSSR (215 aa)) enclose the DOG1 domain. The interval 513–539 (GTESVSPTGTELQPMHNQPQQNQYSGF) is disordered.

It belongs to the bZIP family. As to quaternary structure, interacts with NPR1/NH1 and NPR3/NH3.

The protein resides in the nucleus. In terms of biological role, transcriptional regulator involved in defense response. Acts as a transcriptional activator in vitro. The sequence is that of Transcription factor LG2 from Oryza sativa subsp. japonica (Rice).